The primary structure comprises 423 residues: Glucose-1-phosphate adenylyltransferase (423 aa).

Alpha-D-glucose 1-phosphate is bound by residues Tyr-108, Gly-173, 188 to 189 (EK), and Ser-207.

Belongs to the bacterial/plant glucose-1-phosphate adenylyltransferase family. As to quaternary structure, homotetramer.

The catalysed reaction is alpha-D-glucose 1-phosphate + ATP + H(+) = ADP-alpha-D-glucose + diphosphate. The protein operates within glycan biosynthesis; glycogen biosynthesis. In terms of biological role, involved in the biosynthesis of ADP-glucose, a building block required for the elongation reactions to produce glycogen. Catalyzes the reaction between ATP and alpha-D-glucose 1-phosphate (G1P) to produce pyrophosphate and ADP-Glc. This chain is Glucose-1-phosphate adenylyltransferase, found in Francisella tularensis subsp. novicida (strain U112).